We begin with the raw amino-acid sequence, 512 residues long: Catalase (512 aa).

Active-site residues include histidine 60 and asparagine 133. Tyrosine 344 contributes to the heme binding site. Serine 363 is modified (phosphoserine). Residues glutamate 488–proline 505 show a composition bias toward basic and acidic residues. Residues glutamate 488 to serine 512 form a disordered region.

Belongs to the catalase family. Requires heme as cofactor.

It localises to the peroxisome matrix. It catalyses the reaction 2 H2O2 = O2 + 2 H2O. Catalyzes the degradation of hydrogen peroxide (H(2)O(2)) generated by peroxisomal oxidases to water and oxygen, thereby protecting cells from the toxic effects of hydrogen peroxide. This Schizosaccharomyces pombe (strain 972 / ATCC 24843) (Fission yeast) protein is Catalase (cta1).